A 613-amino-acid polypeptide reads, in one-letter code: Dihydroxy-acid dehydratase 3 (613 aa).

Mg(2+) is bound at residue aspartate 81. Cysteine 122 lines the [2Fe-2S] cluster pocket. Mg(2+) contacts are provided by aspartate 123 and lysine 124. Lysine 124 is subject to N6-carboxylysine. Cysteine 197 lines the [2Fe-2S] cluster pocket. Glutamate 493 contacts Mg(2+). Serine 519 functions as the Proton acceptor in the catalytic mechanism.

Belongs to the IlvD/Edd family. Homodimer. Requires [2Fe-2S] cluster as cofactor. Mg(2+) serves as cofactor.

The catalysed reaction is (2R)-2,3-dihydroxy-3-methylbutanoate = 3-methyl-2-oxobutanoate + H2O. It carries out the reaction (2R,3R)-2,3-dihydroxy-3-methylpentanoate = (S)-3-methyl-2-oxopentanoate + H2O. Its pathway is amino-acid biosynthesis; L-isoleucine biosynthesis; L-isoleucine from 2-oxobutanoate: step 3/4. It functions in the pathway amino-acid biosynthesis; L-valine biosynthesis; L-valine from pyruvate: step 3/4. In terms of biological role, functions in the biosynthesis of branched-chain amino acids. Catalyzes the dehydration of (2R,3R)-2,3-dihydroxy-3-methylpentanoate (2,3-dihydroxy-3-methylvalerate) into 2-oxo-3-methylpentanoate (2-oxo-3-methylvalerate) and of (2R)-2,3-dihydroxy-3-methylbutanoate (2,3-dihydroxyisovalerate) into 2-oxo-3-methylbutanoate (2-oxoisovalerate), the penultimate precursor to L-isoleucine and L-valine, respectively. The polypeptide is Dihydroxy-acid dehydratase 3 (Nocardia farcinica (strain IFM 10152)).